We begin with the raw amino-acid sequence, 556 residues long: Man(5)GlcNAc(2)-PP-dolichol translocation protein RFT1 (556 aa).

A run of 12 helical transmembrane segments spans residues leucine 10–isoleucine 30, glutamate 41–serine 61, leucine 91–leucine 111, valine 129–phenylalanine 149, isoleucine 156–glycine 176, alanine 184–phenylalanine 204, serine 353–glycine 373, phenylalanine 389–leucine 409, valine 440–phenylalanine 460, alanine 461–isoleucine 477, leucine 489–cysteine 509, and leucine 517–leucine 537.

The protein belongs to the RFT1 family.

It localises to the endoplasmic reticulum membrane. It participates in protein modification; protein glycosylation. Functionally, intramembrane glycolipid transporter that operates in the biosynthetic pathway of dolichol-linked oligosaccharides, the glycan precursors employed in protein asparagine (N)-glycosylation. The sequential addition of sugars to dolichol pyrophosphate produces dolichol-linked oligosaccharides containing fourteen sugars, including two GlcNAcs, nine mannoses and three glucoses. Once assembled, the oligosaccharide is transferred from the lipid to nascent proteins by oligosaccharyltransferases. The assembly of dolichol-linked oligosaccharides begins on the cytosolic side of the endoplasmic reticulum membrane and finishes in its lumen. RFT1 could mediate the translocation of the cytosolically oriented intermediate DolPP-GlcNAc2Man5, produced by ALG11, into the ER lumen where dolichol-linked oligosaccharides assembly continues. However, the intramembrane lipid transporter activity could not be confirmed in vitro. This chain is Man(5)GlcNAc(2)-PP-dolichol translocation protein RFT1, found in Drosophila melanogaster (Fruit fly).